Here is a 203-residue protein sequence, read N- to C-terminus: Holliday junction branch migration complex subunit RuvA (203 aa).

Positions 1-63 (MIAFVSGPVA…EDSLTLYGFV (63 aa)) are domain I. The domain II stretch occupies residues 64–141 (DDDERQVFEL…GEPLGTGGPA (78 aa)). Positions 141–145 (AIGRA) are flexible linker. Positions 146–203 (VTTGWREQLHAALIGLGYATREADEAVAAVAPQAEAAGGTPQVGQLLKAALQTLNRTR) are domain III.

The protein belongs to the RuvA family. Homotetramer. Forms an RuvA(8)-RuvB(12)-Holliday junction (HJ) complex. HJ DNA is sandwiched between 2 RuvA tetramers; dsDNA enters through RuvA and exits via RuvB. An RuvB hexamer assembles on each DNA strand where it exits the tetramer. Each RuvB hexamer is contacted by two RuvA subunits (via domain III) on 2 adjacent RuvB subunits; this complex drives branch migration. In the full resolvosome a probable DNA-RuvA(4)-RuvB(12)-RuvC(2) complex forms which resolves the HJ.

The protein localises to the cytoplasm. Functionally, the RuvA-RuvB-RuvC complex processes Holliday junction (HJ) DNA during genetic recombination and DNA repair, while the RuvA-RuvB complex plays an important role in the rescue of blocked DNA replication forks via replication fork reversal (RFR). RuvA specifically binds to HJ cruciform DNA, conferring on it an open structure. The RuvB hexamer acts as an ATP-dependent pump, pulling dsDNA into and through the RuvAB complex. HJ branch migration allows RuvC to scan DNA until it finds its consensus sequence, where it cleaves and resolves the cruciform DNA. The protein is Holliday junction branch migration complex subunit RuvA of Streptomyces avermitilis (strain ATCC 31267 / DSM 46492 / JCM 5070 / NBRC 14893 / NCIMB 12804 / NRRL 8165 / MA-4680).